We begin with the raw amino-acid sequence, 173 residues long: Translation initiation factor IF-3 (173 aa).

This sequence belongs to the IF-3 family. Monomer.

The protein resides in the cytoplasm. Its function is as follows. IF-3 binds to the 30S ribosomal subunit and shifts the equilibrium between 70S ribosomes and their 50S and 30S subunits in favor of the free subunits, thus enhancing the availability of 30S subunits on which protein synthesis initiation begins. In Caulobacter sp. (strain K31), this protein is Translation initiation factor IF-3.